We begin with the raw amino-acid sequence, 249 residues long: uncharacterized protein (249 aa).

It is found in the cytoplasm. The protein resides in the nucleus. It localises to the nucleolus. This is an uncharacterized protein from Schizosaccharomyces pombe (strain 972 / ATCC 24843) (Fission yeast).